The chain runs to 493 residues: MEPLRAPALRRLLPPLLLLLLSLPPRARAKYVRGNLSSKEDWVFLTRFCFLSDYGRLDFRFRYPEAKCCQNILLYFDDPSQWPAVYKAGDKDCLAKESVIRPENNQVINLTTQYAWSGCQVVSEEGTRYLSCSSGRSFRSGDGLQLEYEMVLTNGKSFWTRHFSADEFGILETDVTFLLIFILIFFLSCYFGYLLKGRQLLHTTYKMFMAAAGVEVLSLLFFCIYWGQYATDGIGNESVKILAKLLFSSSFLIFLLMLILLGKGFTVTRGRISHAGSVKLSVYMTLYTLTHVVLLIYEAEFFDPGQVLYTYESPAGYGLIGLQVAAYVWFCYAVLVSLRHFPEKQPFYVPFFAAYTLWFFAVPVMALIANFGIPKWAREKIVNGIQLGIHLYAHGVFLIMTRPSAANKNFPYHVRTSQIASAGVPGPGGSQSADKAFPQHVYGNVTFISDSVPNFTELFSIPPPATSPLPRAAPDSGLPLFRDLRPPGPLRDL.

The chain crosses the membrane as a helical span at residues 9 to 29; it reads LRRLLPPLLLLLLSLPPRARA. A glycan (N-linked (GlcNAc...) asparagine) is linked at asparagine 35. 7 consecutive transmembrane segments (helical) span residues 175-195, 207-227, 241-261, 282-302, 318-338, 349-369, and 381-401; these read VTFL…GYLL, MFMA…IYWG, ILAK…LILL, VYMT…AEFF, GLIG…LVSL, VPFF…ALIA, and IVNG…LIMT. Asparagine 444 is a glycosylation site (N-linked (GlcNAc...) asparagine). The interval 464 to 493 is disordered; sequence PATSPLPRAAPDSGLPLFRDLRPPGPLRDL.

It is found in the membrane. The sequence is that of Transmembrane protein 145 (TMEM145) from Homo sapiens (Human).